Here is a 222-residue protein sequence, read N- to C-terminus: Ktr system potassium uptake protein A (222 aa).

The region spanning 6–122 (NKQFAVIGLG…LEKIGADRII (117 aa)) is the RCK N-terminal domain. Residues Arg-16, 36–38 (DIN), 56–57 (NA), 78–80 (IGA), 103–105 (KAQ), His-109, and Glu-125 contribute to the NAD(+) site. One can recognise an RCK C-terminal domain in the interval 139-222 (ENVLNYIDLS…DIKRFENEGM (84 aa)).

This sequence belongs to the KtrA potassium transport family. In terms of assembly, homodimer, tetramer (dimer of homodimer) and octamer (tetramer of homodimer). Part of the KtrAB complex formed by an octameric catalytic ring of KtrA and a membrane associated dimer of KtrB forming a potassium channel.

The protein resides in the cell membrane. Functionally, catalytic subunit of the KtrAB potassium uptake transporter. The 2 major potassium transporter complexes KtrAB and KtrCD confer resistance to both suddenly imposed and prolonged osmotic stress. The polypeptide is Ktr system potassium uptake protein A (ktrA) (Bacillus subtilis (strain 168)).